Consider the following 264-residue polypeptide: Molybdenum transport system permease protein ModB (264 aa).

6 helical membrane passes run 11–31 (VYLP…AIAI), 57–77 (TAAA…LVLA), 90–110 (LILL…LYAF), 127–147 (IAFS…PYLV), 176–196 (WWRV…VLAF), and 234–254 (AAVA…LGVG). An ABC transmembrane type-1 domain is found at 51-253 (LLLSVKTAAA…VVAALVVLGV (203 aa)).

This sequence belongs to the binding-protein-dependent transport system permease family. CysTW subfamily.

It localises to the cell membrane. Its function is as follows. Part of the binding-protein-dependent transport system ModABCD for molybdenum; probably responsible for the translocation of the substrate across the membrane. In Mycobacterium bovis (strain ATCC BAA-935 / AF2122/97), this protein is Molybdenum transport system permease protein ModB (modB).